The primary structure comprises 336 residues: Casein kinase II subunit alpha (336 aa).

Residues 32-317 (YEVVRKIGRG…AKEAMAHPYF (286 aa)) form the Protein kinase domain. Residues 38-46 (IGRGKYSEV) and lysine 61 contribute to the ATP site. The Proton acceptor role is filled by aspartate 149.

Belongs to the protein kinase superfamily. Ser/Thr protein kinase family. CK2 subfamily. In terms of assembly, tetramer composed of two alpha chains, one beta chain and one beta' chain.

It catalyses the reaction L-seryl-[protein] + ATP = O-phospho-L-seryl-[protein] + ADP + H(+). It carries out the reaction L-threonyl-[protein] + ATP = O-phospho-L-threonyl-[protein] + ADP + H(+). Functionally, catalytic subunit of a constitutively active serine/threonine-protein kinase complex that phosphorylates a large number of substrates containing acidic residues C-terminal to the phosphorylated serine or threonine. Phosphorylates the frq clock protein thus regulating the circadian clock. This is Casein kinase II subunit alpha (cka) from Neurospora crassa (strain ATCC 24698 / 74-OR23-1A / CBS 708.71 / DSM 1257 / FGSC 987).